Reading from the N-terminus, the 424-residue chain is SWI/SNF and RSC complexes subunit arp42 (424 aa).

This sequence belongs to the actin family. Component of the RSC complex composed of at least arp9, arp42, rsc1, rsc4, rsc7, rsc9, rsc58, sfh1, snf21, ssr1, ssr2, ssr3 and ssr4. The complex interacts with histone and histone variant components of centromeric chromatin. Component of the SWI/SNF global transcription activator complex composed of at least arp9, arp42, snf5, snf22, snf30, sbf59, sol1, ssr1, ssr2, ssr3, ssr4 and tfg3.

It is found in the cytoplasm. It localises to the nucleus. Component of the chromatin structure remodeling complex (RSC), which is involved in transcription regulation and nucleosome positioning. Controls particularly membrane and organelle development genes. Part of the SWI/SNF complex, an ATP-dependent chromatin remodeling complex, required for the positive and negative regulation of gene expression of a large number of genes. It changes chromatin structure by altering DNA-histone contacts within a nucleosome, leading eventually to a change in nucleosome position, thus facilitating or repressing binding of gene-specific transcription factors. The sequence is that of SWI/SNF and RSC complexes subunit arp42 (arp42) from Schizosaccharomyces pombe (strain 972 / ATCC 24843) (Fission yeast).